The primary structure comprises 395 residues: Obg-like ATPase 1 (395 aa).

An OBG-type G domain is found at 22–280; that stretch reads LKVGILGLPN…MPEDERQKYL (259 aa). 31–36 lines the ATP pocket; sequence NVGKST. Mg(2+) contacts are provided by serine 35 and threonine 55. Leucine 228 lines the ATP pocket. Residues 301–384 enclose the TGS domain; it reads QLEYFFTSGE…QDGDVIFFKF (84 aa).

It belongs to the TRAFAC class OBG-HflX-like GTPase superfamily. OBG GTPase family. YchF/OLA1 subfamily. As to quaternary structure, monomer. The cofactor is Mg(2+). In terms of tissue distribution, expressed in the nervous system, pharyngeal muscles and intestine (at protein level).

The protein localises to the cytoplasm. Functionally, hydrolyzes ATP, and can also hydrolyze GTP with lower efficiency. Has lower affinity for GTP. Plays a role in regulating starvation-induced thermotaxis responses in AFD thermosensory neurons. The chain is Obg-like ATPase 1 from Caenorhabditis elegans.